We begin with the raw amino-acid sequence, 310 residues long: 4-diphosphocytidyl-2-C-methyl-D-erythritol kinase (310 aa).

Lys11 is an active-site residue. Residue 95–105 (PIGAGLAGGSA) participates in ATP binding. Asp137 is an active-site residue.

Belongs to the GHMP kinase family. IspE subfamily.

It catalyses the reaction 4-CDP-2-C-methyl-D-erythritol + ATP = 4-CDP-2-C-methyl-D-erythritol 2-phosphate + ADP + H(+). It participates in isoprenoid biosynthesis; isopentenyl diphosphate biosynthesis via DXP pathway; isopentenyl diphosphate from 1-deoxy-D-xylulose 5-phosphate: step 3/6. Its function is as follows. Catalyzes the phosphorylation of the position 2 hydroxy group of 4-diphosphocytidyl-2C-methyl-D-erythritol. This is 4-diphosphocytidyl-2-C-methyl-D-erythritol kinase from Acaryochloris marina (strain MBIC 11017).